The following is a 100-amino-acid chain: Urease subunit gamma (100 aa).

Belongs to the urease gamma subunit family. As to quaternary structure, heterotrimer of UreA (gamma), UreB (beta) and UreC (alpha) subunits. Three heterotrimers associate to form the active enzyme.

The protein resides in the cytoplasm. The catalysed reaction is urea + 2 H2O + H(+) = hydrogencarbonate + 2 NH4(+). It functions in the pathway nitrogen metabolism; urea degradation; CO(2) and NH(3) from urea (urease route): step 1/1. The sequence is that of Urease subunit gamma from Ralstonia nicotianae (strain ATCC BAA-1114 / GMI1000) (Ralstonia solanacearum).